The primary structure comprises 348 residues: Dihydroorotase (348 aa).

Histidine 14 and histidine 16 together coordinate Zn(2+). Substrate is bound by residues 16–18 (HLR) and asparagine 42. Lysine 100, histidine 137, and histidine 175 together coordinate Zn(2+). An N6-carboxylysine modification is found at lysine 100. Substrate is bound at residue histidine 137. A substrate-binding site is contributed by leucine 220. Aspartate 248 contributes to the Zn(2+) binding site. Aspartate 248 is an active-site residue. Substrate-binding residues include histidine 252 and alanine 264.

This sequence belongs to the metallo-dependent hydrolases superfamily. DHOase family. Class II DHOase subfamily. In terms of assembly, homodimer. Zn(2+) serves as cofactor.

The catalysed reaction is (S)-dihydroorotate + H2O = N-carbamoyl-L-aspartate + H(+). The protein operates within pyrimidine metabolism; UMP biosynthesis via de novo pathway; (S)-dihydroorotate from bicarbonate: step 3/3. Catalyzes the reversible cyclization of carbamoyl aspartate to dihydroorotate. This Pseudomonas putida (strain ATCC 700007 / DSM 6899 / JCM 31910 / BCRC 17059 / LMG 24140 / F1) protein is Dihydroorotase.